Reading from the N-terminus, the 187-residue chain is MASTADIKNGVVLNMDGQLWTVIEFQHVKPGKGGAFVRTKVKNVMSGKVVDRTFNAGAKIETETVDRRDFQYLYADGENFVFMDTSDYDQITLSAAQVGDAKNFMLENQDVTVALHNGEGLYVELPASVVLTITYTEPGLQGDRSTGGTKPATVETGHQIQVPLFLEQGTRVKVDTRTGDYLGRVTD.

Belongs to the elongation factor P family.

Its subcellular location is the cytoplasm. The protein operates within protein biosynthesis; polypeptide chain elongation. Its function is as follows. Involved in peptide bond synthesis. Stimulates efficient translation and peptide-bond synthesis on native or reconstituted 70S ribosomes in vitro. Probably functions indirectly by altering the affinity of the ribosome for aminoacyl-tRNA, thus increasing their reactivity as acceptors for peptidyl transferase. The chain is Elongation factor P from Clavibacter michiganensis subsp. michiganensis (strain NCPPB 382).